The primary structure comprises 2058 residues: E3 ubiquitin-protein ligase ubr-1 (2058 aa).

The segment at 93 to 164 (QICGHVFKNG…EGYACANHEK (72 aa)) adopts a UBR-type zinc-finger fold. The segment at 1107–1175 (VPEAAPAPEN…TPSEKSETVV (69 aa)) is disordered. Low complexity predominate over residues 1108-1119 (PEAAPAPENKPA). 2 stretches are compositionally biased toward basic and acidic residues: residues 1123–1138 (EEIK…EMRQ) and 1153–1175 (KKIE…ETVV). The RING-type; atypical zinc-finger motif lies at 1217–1335 (LTCILCQEDE…GEYQCPLCKR (119 aa)). 2 disordered regions span residues 1381–1416 (LSSE…DTAN) and 1475–1499 (PAAT…ESGK). The segment covering 1388–1397 (KKGHSRKRSH) has biased composition (basic residues). A compositionally biased stretch (basic and acidic residues) spans 1398 to 1413 (SERSLLDLEKLSKDPD). The segment covering 1486–1495 (GSSSRIPESQ) has biased composition (polar residues). Residues 1695-1715 (ILQIDILSLAISLMMTIGWTW) form a helical membrane-spanning segment.

It belongs to the E3 ubiquitin-protein ligase UBR1-like family. In terms of assembly, interacts with ubc-1. Component of a complex containing at least ced-3, ubr-1 and possibly ate-1. Within complex interacts with ced-3 (via the p17 subunit); this interaction is required for the ced-3-mediated cleavage and subsequent degradation of the heterochronic protein lin-28. In terms of tissue distribution, expressed in pharyngeal muscles, body wall muscles and a subset of neurons throughout postembryonic development. Prominently expressed in premotor interneurons, but not expressed in ventral cord motor neurons. Weakly expressed in hypodermal seam cells.

It is found in the membrane. It catalyses the reaction S-ubiquitinyl-[E2 ubiquitin-conjugating enzyme]-L-cysteine + [acceptor protein]-L-lysine = [E2 ubiquitin-conjugating enzyme]-L-cysteine + N(6)-ubiquitinyl-[acceptor protein]-L-lysine.. Its pathway is protein modification; protein ubiquitination. Its function is as follows. E3 ubiquitin-protein ligase which is a component of the N-end rule pathway. Recognizes and binds to proteins bearing specific N-terminal residues that are destabilizing according to the N-end rule, leading to their ubiquitination and subsequent degradation. In complex with ced-3, required for the ced-3-mediated cleavage and subsequent degradation of the heterochronic protein lin-28 to regulate seam cell fate patterning during larval development. Negatively regulates glutamate metabolism through the aspartate aminotransferase got-1.2. Modulation of glutamate levels most likely controls locomotory behavior, in particular backwards locomotion or 'reversals'. This is E3 ubiquitin-protein ligase ubr-1 from Caenorhabditis elegans.